A 251-amino-acid chain; its full sequence is Ubiquinone/menaquinone biosynthesis C-methyltransferase UbiE (251 aa).

S-adenosyl-L-methionine is bound by residues threonine 74, aspartate 95, 123–124, and serine 140; that span reads NA.

The protein belongs to the class I-like SAM-binding methyltransferase superfamily. MenG/UbiE family.

The enzyme catalyses a 2-demethylmenaquinol + S-adenosyl-L-methionine = a menaquinol + S-adenosyl-L-homocysteine + H(+). It carries out the reaction a 2-methoxy-6-(all-trans-polyprenyl)benzene-1,4-diol + S-adenosyl-L-methionine = a 5-methoxy-2-methyl-3-(all-trans-polyprenyl)benzene-1,4-diol + S-adenosyl-L-homocysteine + H(+). It participates in quinol/quinone metabolism; menaquinone biosynthesis; menaquinol from 1,4-dihydroxy-2-naphthoate: step 2/2. The protein operates within cofactor biosynthesis; ubiquinone biosynthesis. Functionally, methyltransferase required for the conversion of demethylmenaquinol (DMKH2) to menaquinol (MKH2) and the conversion of 2-polyprenyl-6-methoxy-1,4-benzoquinol (DDMQH2) to 2-polyprenyl-3-methyl-6-methoxy-1,4-benzoquinol (DMQH2). This chain is Ubiquinone/menaquinone biosynthesis C-methyltransferase UbiE, found in Salmonella paratyphi A (strain AKU_12601).